We begin with the raw amino-acid sequence, 514 residues long: 2,3-bisphosphoglycerate-independent phosphoglycerate mutase (514 aa).

Mn(2+)-binding residues include aspartate 14 and serine 64. Serine 64 acts as the Phosphoserine intermediate in catalysis. Substrate contacts are provided by residues histidine 125, 155-156 (RD), arginine 187, arginine 193, 263-266 (RADR), and lysine 336. Residues aspartate 403, histidine 407, aspartate 444, histidine 445, and histidine 463 each contribute to the Mn(2+) site.

Belongs to the BPG-independent phosphoglycerate mutase family. In terms of assembly, monomer. The cofactor is Mn(2+).

The enzyme catalyses (2R)-2-phosphoglycerate = (2R)-3-phosphoglycerate. The protein operates within carbohydrate degradation; glycolysis; pyruvate from D-glyceraldehyde 3-phosphate: step 3/5. Functionally, catalyzes the interconversion of 2-phosphoglycerate and 3-phosphoglycerate. The protein is 2,3-bisphosphoglycerate-independent phosphoglycerate mutase of Shigella flexneri.